The following is a 662-amino-acid chain: Aprataxin-like protein (662 aa).

Positions 4-108 (SSALIKDISK…ISKDFVSTSL (105 aa)) constitute an HIT domain. The C2H2-type zinc finger occupies 381-403 (LRCNQCEFVTNMLLDLKAHLYQH). The tract at residues 482–662 (KNINGPSVNM…PAPPSNSKPS (181 aa)) is disordered. The segment covering 490–500 (NMMNQNNPNNP) has biased composition (low complexity). Composition is skewed to polar residues over residues 501–513 (FRNTPHLNRQSQK) and 560–569 (GHQQFPNASS). Residues 570–582 (VGGGQTGLPGQGQ) are compositionally biased toward gly residues. The segment covering 588–599 (WNSNKIFNQQNR) has biased composition (polar residues). Residues 600–626 (QNTVQAQPQAQNQQTNQQQIQNSNKNQ) are compositionally biased toward low complexity. Residues 653–662 (PAPPSNSKPS) are compositionally biased toward pro residues.

The protein resides in the nucleus. In terms of biological role, DNA-binding protein involved in single-strand DNA break repair, double-strand DNA break repair and base excision repair. Resolves abortive DNA ligation intermediates formed either at base excision sites, or when DNA ligases attempt to repair non-ligatable breaks induced by reactive oxygen species. Catalyzes the release of adenylate groups covalently linked to 5'-phosphate termini, resulting in the production of 5'-phosphate termini that can be efficiently rejoined. This Drosophila melanogaster (Fruit fly) protein is Aprataxin-like protein.